Here is a 157-residue protein sequence, read N- to C-terminus: Protein Smg (157 aa).

It belongs to the Smg family.

The polypeptide is Protein Smg (Sodalis glossinidius (strain morsitans)).